The chain runs to 366 residues: D-alanine--D-alanine ligase (366 aa).

The ATP-grasp domain occupies 150 to 353 (KRVLRDAGVP…YPALVDRLIV (204 aa)). Residue 180–235 (IGQLGLPLFIKPASQGSSVGVSKVTDRAGFAAALALAFRYDAKVLVEQGISGREIE) coordinates ATP. Mg(2+) is bound by residues aspartate 307, glutamate 320, and asparagine 322.

It belongs to the D-alanine--D-alanine ligase family. The cofactor is Mg(2+). It depends on Mn(2+) as a cofactor.

Its subcellular location is the cytoplasm. The catalysed reaction is 2 D-alanine + ATP = D-alanyl-D-alanine + ADP + phosphate + H(+). Its pathway is cell wall biogenesis; peptidoglycan biosynthesis. Functionally, cell wall formation. This Sodalis glossinidius (strain morsitans) protein is D-alanine--D-alanine ligase.